We begin with the raw amino-acid sequence, 671 residues long: cGMP-dependent protein kinase 1 (671 aa).

N-acetylserine is present on Ser-2. The stretch at 2–59 (SELEEDFAKILMLKEERIKELEKRLSEKEEEIQELKRKLHKCQSVLPVPSTHIGPRTT) forms a coiled coil. The required for dimerization stretch occupies residues 2–102 (SELEEDFAKI…LIKEAILDND (101 aa)). The leucine-zipper stretch occupies residues 9 to 44 (AKILMLKEERIKELEKRLSEKEEEIQELKRKLHKCQ). The tract at residues 50–75 (PSTHIGPRTTRAQGISAEPQTYRSFH) is autoinhibitory domain. Thr-59 is modified (phosphothreonine; by autocatalysis). A cGMP-binding, high affinity region spans residues 103–220 (FMKNLELSQI…EYMEFLKSVP (118 aa)). 3',5'-cyclic GMP-binding positions include 167-170 (GELA), 177-178 (RT), Arg-282, 291-294 (GEKA), 301-302 (RT), and Tyr-336. Residues 221–341 (TFQSLPEEIL…SNKAYEDAEA (121 aa)) form a cGMP-binding, low affinity region. Positions 360–619 (FNIIDTLGVG…VKDIQKHKWF (260 aa)) constitute a Protein kinase domain. ATP is bound by residues 366-374 (LGVGGFGRV) and Lys-390. Residue Asp-484 is the Proton acceptor of the active site. Residue Thr-515 is modified to Phosphothreonine. The AGC-kinase C-terminal domain occupies 620-671 (EGFNWEGLRKGTLTPPIIPSVASPTDTSNFDGFPEDNDEPPPDDNSGWDIDF). Residues 635–671 (PIIPSVASPTDTSNFDGFPEDNDEPPPDDNSGWDIDF) form a disordered region. Over residues 652 to 661 (FPEDNDEPPP) the composition is skewed to acidic residues.

It belongs to the protein kinase superfamily. AGC Ser/Thr protein kinase family. cGMP subfamily. In terms of assembly, isoform alpha: parallel homodimer or heterodimer and also heterotetramer. Interacts directly with PPP1R12A. Non-covalent dimer of dimer of PRKG1-PRKG1 and PPP1R12A-PPP1R12A. This interaction targets PRKG1 to stress fibers to mediate smooth muscle cell relaxation and vasodilation in responses to rises in cGMP. Isoform beta: antiparallel homodimer. Part of cGMP kinase signaling complex at least composed of ACTA2/alpha-actin, CNN1/calponin H1, PLN/phospholamban, PRKG1 and ITPR1. Interacts with IRAG1. Forms a stable complex with ITPR1, IRAG1, and isoform beta of PRKG1. Interacts with TRPC7 (via ankyrin repeat domain). Isoform alpha interacts with RGS2. Interacts with GTF2I. Autophosphorylation increases kinase activity. Post-translationally, 65 kDa monomer is produced by proteolytic cleavage.

The protein localises to the cytoplasm. It catalyses the reaction L-seryl-[protein] + ATP = O-phospho-L-seryl-[protein] + ADP + H(+). The catalysed reaction is L-threonyl-[protein] + ATP = O-phospho-L-threonyl-[protein] + ADP + H(+). In the absence of cGMP, PRKG1 activity is suppressed by autoinhibitory contacts. Functionally, serine/threonine protein kinase that acts as a key mediator of the nitric oxide (NO)/cGMP signaling pathway. GMP binding activates PRKG1, which phosphorylates serines and threonines on many cellular proteins. Numerous protein targets for PRKG1 phosphorylation are implicated in modulating cellular calcium, but the contribution of each of these targets may vary substantially among cell types. Proteins that are phosphorylated by PRKG1 regulate platelet activation and adhesion, smooth muscle contraction, cardiac function, gene expression, feedback of the NO-signaling pathway, and other processes involved in several aspects of the CNS like axon guidance, hippocampal and cerebellar learning, circadian rhythm and nociception. Smooth muscle relaxation is mediated through lowering of intracellular free calcium, by desensitization of contractile proteins to calcium, and by decrease in the contractile state of smooth muscle or in platelet activation. Regulates intracellular calcium levels via several pathways: phosphorylates IRAG1 and inhibits IP3-induced Ca(2+) release from intracellular stores, phosphorylation of KCNMA1 (BKCa) channels decreases intracellular Ca(2+) levels, which leads to increased opening of this channel. PRKG1 phosphorylates the canonical transient receptor potential channel (TRPC) family which inactivates the associated inward calcium current. Another mode of action of NO/cGMP/PKGI signaling involves PKGI-mediated inactivation of the Ras homolog gene family member A (RhoA). Phosphorylation of RHOA by PRKG1 blocks the action of this protein in myriad processes: regulation of RHOA translocation; decreasing contraction; controlling vesicle trafficking, reduction of myosin light chain phosphorylation resulting in vasorelaxation. Activation of PRKG1 by NO signaling also alters gene expression in a number of tissues. In smooth muscle cells, increased cGMP and PRKG1 activity influence expression of smooth muscle-specific contractile proteins, levels of proteins in the NO/cGMP signaling pathway, down-regulation of the matrix proteins osteopontin and thrombospondin-1 to limit smooth muscle cell migration and phenotype. Regulates vasodilator-stimulated phosphoprotein (VASP) functions in platelets and smooth muscle. This is cGMP-dependent protein kinase 1 (PRKG1) from Oryctolagus cuniculus (Rabbit).